A 623-amino-acid polypeptide reads, in one-letter code: Xaa-Pro aminopeptidase 1 (623 aa).

Position 77 (R77) interacts with a peptide. At K304 the chain carries N6-acetyllysine. H395 provides a ligand contact to a peptide. Residues D415, D426, and H489 each contribute to the Mn(2+) site. Positions 489, 498, and 523 each coordinate a peptide. 2 residues coordinate Mn(2+): E523 and E537.

Belongs to the peptidase M24B family. As to quaternary structure, homodimer. The cofactor is Mn(2+). In terms of tissue distribution, expressed in all tissues tested, including pancreas, heart, muscle, kidney, liver, lung and brain. Highest levels in pancreas.

Its subcellular location is the cytoplasm. It localises to the cytosol. The catalysed reaction is Release of any N-terminal amino acid, including proline, that is linked to proline, even from a dipeptide or tripeptide.. Inhibited by apstatin and the metal ion chelators EDTA and 1,10-phenanthroline. Partially inhibited by dithiothreitol. Not inhibited by enalaprilat or amastatin. Specifically inhibited by the pseudodipeptide CQ31. Inhibition by CQ31 indirectly activates the CARD8 inflammasome: dipeptide accumulation following PEPD inactivation weaky inhibit dipeptidyl peptidases DDP8 and DPP9, relieving DPP8- and/or DPP9-mediated inhibition of CARD8. Its function is as follows. Metalloaminopeptidase that catalyzes the removal of a penultimate prolyl residue from the N-termini of peptides, such as Arg-Pro-Pro. Contributes to the degradation of bradykinin. The sequence is that of Xaa-Pro aminopeptidase 1 from Homo sapiens (Human).